The sequence spans 126 residues: Aspartate 1-decarboxylase (126 aa).

Catalysis depends on S25, which acts as the Schiff-base intermediate with substrate; via pyruvic acid. A Pyruvic acid (Ser) modification is found at S25. T57 contacts substrate. Y58 acts as the Proton donor in catalysis. 73–75 (GAA) lines the substrate pocket.

The protein belongs to the PanD family. In terms of assembly, heterooctamer of four alpha and four beta subunits. It depends on pyruvate as a cofactor. Is synthesized initially as an inactive proenzyme, which is activated by self-cleavage at a specific serine bond to produce a beta-subunit with a hydroxyl group at its C-terminus and an alpha-subunit with a pyruvoyl group at its N-terminus.

Its subcellular location is the cytoplasm. The catalysed reaction is L-aspartate + H(+) = beta-alanine + CO2. The protein operates within cofactor biosynthesis; (R)-pantothenate biosynthesis; beta-alanine from L-aspartate: step 1/1. Its function is as follows. Catalyzes the pyruvoyl-dependent decarboxylation of aspartate to produce beta-alanine. This is Aspartate 1-decarboxylase from Chromohalobacter salexigens (strain ATCC BAA-138 / DSM 3043 / CIP 106854 / NCIMB 13768 / 1H11).